Here is a 736-residue protein sequence, read N- to C-terminus: Catalase-peroxidase (736 aa).

A disordered region spans residues 1-25; sequence MSENGKCPVTGKTSKPVAGGGTSNQ. Positions 96–224 form a cross-link, tryptophyl-tyrosyl-methioninium (Trp-Tyr) (with M-250); it reads WHSAGTYRMG…LAAVQMGLIY (129 aa). His-97 functions as the Proton acceptor in the catalytic mechanism. Residues 224–250 constitute a cross-link (tryptophyl-tyrosyl-methioninium (Tyr-Met) (with W-96)); it reads YVNPEGPDGNPDPIASGKDVRETFARM. Residue His-265 participates in heme b binding. The interval 294-313 is disordered; sequence GWKSSHGRGKGGDTISSGIE.

The protein belongs to the peroxidase family. Peroxidase/catalase subfamily. As to quaternary structure, homodimer or homotetramer. Heme b is required as a cofactor. Formation of the three residue Trp-Tyr-Met cross-link is important for the catalase, but not the peroxidase activity of the enzyme.

It carries out the reaction H2O2 + AH2 = A + 2 H2O. The catalysed reaction is 2 H2O2 = O2 + 2 H2O. Bifunctional enzyme with both catalase and broad-spectrum peroxidase activity. This Desulfatibacillum aliphaticivorans protein is Catalase-peroxidase.